The sequence spans 391 residues: Chaperone protein DnaJ (391 aa).

The region spanning 6-71 is the J domain; the sequence is CYYEVLKVER…NKRARYDQYG (66 aa). The CR-type zinc finger occupies 137 to 215; it reads GCHKDIVFRR…CRGTGTQNEK (79 aa). Zn(2+) contacts are provided by cysteine 150, cysteine 153, cysteine 167, cysteine 170, cysteine 189, cysteine 192, cysteine 203, and cysteine 206. 4 CXXCXGXG motif repeats span residues 150-157, 167-174, 189-196, and 203-210; these read CDTCDGSG, CTMCGGQG, CPTCKGAG, and CGKCRGTG. A disordered region spans residues 372 to 391; it reads FFDPEPEEAGTGSTDTEKDS.

The protein belongs to the DnaJ family. Homodimer. Requires Zn(2+) as cofactor.

The protein resides in the cytoplasm. Its function is as follows. Participates actively in the response to hyperosmotic and heat shock by preventing the aggregation of stress-denatured proteins and by disaggregating proteins, also in an autonomous, DnaK-independent fashion. Unfolded proteins bind initially to DnaJ; upon interaction with the DnaJ-bound protein, DnaK hydrolyzes its bound ATP, resulting in the formation of a stable complex. GrpE releases ADP from DnaK; ATP binding to DnaK triggers the release of the substrate protein, thus completing the reaction cycle. Several rounds of ATP-dependent interactions between DnaJ, DnaK and GrpE are required for fully efficient folding. Also involved, together with DnaK and GrpE, in the DNA replication of plasmids through activation of initiation proteins. The protein is Chaperone protein DnaJ of Rhodopirellula baltica (strain DSM 10527 / NCIMB 13988 / SH1).